We begin with the raw amino-acid sequence, 89 residues long: MALTQERKNEIIKAYARHEGDTGSAEVQIAVLTADINELNTHMAAHKHDFHSQRGLMKKIGSRRNLLRYLRNTDIQRYRELIQRLGLRR.

The protein belongs to the universal ribosomal protein uS15 family. As to quaternary structure, part of the 30S ribosomal subunit. Forms a bridge to the 50S subunit in the 70S ribosome, contacting the 23S rRNA.

One of the primary rRNA binding proteins, it binds directly to 16S rRNA where it helps nucleate assembly of the platform of the 30S subunit by binding and bridging several RNA helices of the 16S rRNA. In terms of biological role, forms an intersubunit bridge (bridge B4) with the 23S rRNA of the 50S subunit in the ribosome. The sequence is that of Small ribosomal subunit protein uS15 from Leuconostoc mesenteroides subsp. mesenteroides (strain ATCC 8293 / DSM 20343 / BCRC 11652 / CCM 1803 / JCM 6124 / NCDO 523 / NBRC 100496 / NCIMB 8023 / NCTC 12954 / NRRL B-1118 / 37Y).